The chain runs to 478 residues: Sialidase-4 (478 aa).

Residues 22–25 (YRVP) carry the FRIP motif motif. 2 residues coordinate substrate: R23 and R43. Active-site proton acceptor residues include D47 and D48. One copy of the BNR 1 repeat lies at 127–138 (VTSCDAGLTWGS). The substrate site is built by Y177 and Y179. A BNR 2 repeat occupies 200-211 (FYSDDHGISWHC). Residues E222 and R238 each contribute to the substrate site. One copy of the BNR 3 repeat lies at 247-258 (ALSADEGTSFLP). 2 disordered regions span residues 285-307 (IEPQDDRWTGSPRNTPHSPCFNL) and 335-359 (SRSPENHGLEPGSDGDKTSWTPECP). R383 is a binding site for substrate. Y413 acts as the Nucleophile in catalysis. E434 is a catalytic residue.

It belongs to the glycosyl hydrolase 33 family. In terms of tissue distribution, highly expressed in brain, particularly in hippocampus, and at lower levels in liver and spleen. Expressed in hippocampal neurons (at protein level).

Its subcellular location is the cell membrane. It is found in the endoplasmic reticulum membrane. The protein localises to the microsome membrane. The protein resides in the mitochondrion inner membrane. It localises to the mitochondrion outer membrane. Its subcellular location is the cell projection. It is found in the neuron projection. The protein localises to the lysosome lumen. It carries out the reaction Hydrolysis of alpha-(2-&gt;3)-, alpha-(2-&gt;6)-, alpha-(2-&gt;8)- glycosidic linkages of terminal sialic acid residues in oligosaccharides, glycoproteins, glycolipids, colominic acid and synthetic substrates.. The enzyme catalyses a ganglioside GM3 + H2O = a beta-D-galactosyl-(1-&gt;4)-beta-D-glucosyl-(1&lt;-&gt;1)-ceramide + N-acetylneuraminate. It catalyses the reaction a ganglioside GM3 (d18:1(4E)) + H2O = a beta-D-Gal-(1-&gt;4)-beta-D-Glc-(1&lt;-&gt;1)-Cer(d18:1(4E)) + N-acetylneuraminate. The catalysed reaction is a ganglioside GM2 + H2O = a ganglioside GA2 + N-acetylneuraminate. It carries out the reaction a ganglioside GM2 (d18:1(4E)) + H2O = a ganglioside GA2 (d18:1(4E)) + N-acetylneuraminate. The enzyme catalyses a ganglioside GD1a + H2O = a ganglioside GM1 + N-acetylneuraminate. It catalyses the reaction a ganglioside GD1a (d18:1(4E)) + H2O = a ganglioside GM1 (d18:1(4E)) + N-acetylneuraminate. The catalysed reaction is a ganglioside GD3 + H2O = a ganglioside GM3 + N-acetylneuraminate. It carries out the reaction a ganglioside GD3 (d18:1(4E)) + H2O = a ganglioside GM3 (d18:1(4E)) + N-acetylneuraminate. Exo-alpha-sialidase that catalyzes the hydrolytic cleavage of the terminal sialic acid (N-acetylneuraminic acid, Neu5Ac) of a glycan moiety in the catabolism of glycolipids, glycoproteins and oligosacharides. Efficiently hydrolyzes gangliosides including alpha-(2-&gt;3)-sialylated GD1a and GM3 and alpha-(2-&gt;8)-sialylated GD3. Hydrolyzes poly-alpha-(2-&gt;8)-sialylated neural cell adhesion molecule NCAM1 likely at growth cones, suppressing neurite outgrowth in hippocampal neurons. May desialylate sialyl Lewis A and X antigens at the cell surface, down-regulating these glycan epitopes recognized by SELE/E selectin in the initiation of cell adhesion and extravasation. Has sialidase activity toward mucin, fetuin and sialyllactose. In Mus musculus (Mouse), this protein is Sialidase-4 (Neu4).